A 118-amino-acid polypeptide reads, in one-letter code: Large ribosomal subunit protein bL20 (118 aa).

Belongs to the bacterial ribosomal protein bL20 family.

Its function is as follows. Binds directly to 23S ribosomal RNA and is necessary for the in vitro assembly process of the 50S ribosomal subunit. It is not involved in the protein synthesizing functions of that subunit. This chain is Large ribosomal subunit protein bL20, found in Campylobacter concisus (strain 13826).